We begin with the raw amino-acid sequence, 115 residues long: Large ribosomal subunit protein P2 (115 aa).

Position 1 is an N-acetylmethionine (Met1). Phosphoserine occurs at positions 17 and 19. An N6-acetyllysine; alternate modification is found at Lys21. An N6-succinyllysine; alternate modification is found at Lys21. Residues 76-90 (APGSAAPAAGSAPAA) show a composition bias toward low complexity. Residues 76-115 (APGSAAPAAGSAPAAAEERKEEKKEESEESDDDMGFGLFD) form a disordered region. Phosphoserine is present on residues Ser79 and Ser86. Positions 91–101 (AEERKEEKKEE) are enriched in basic and acidic residues. Phosphoserine occurs at positions 102 and 105.

The protein belongs to the eukaryotic ribosomal protein P1/P2 family. As to quaternary structure, heterodimer with RPLP1 at the lateral ribosomal stalk of the large ribosomal subunit.

In terms of biological role, plays an important role in the elongation step of protein synthesis. This Equus caballus (Horse) protein is Large ribosomal subunit protein P2 (RPLP2).